We begin with the raw amino-acid sequence, 60 residues long: Small ribosomal subunit protein eS17 (60 aa).

Belongs to the eukaryotic ribosomal protein eS17 family.

This is Small ribosomal subunit protein eS17 from Methanosphaera stadtmanae (strain ATCC 43021 / DSM 3091 / JCM 11832 / MCB-3).